A 416-amino-acid chain; its full sequence is Enterobactin exporter EntS (416 aa).

Residues 1–21 lie on the Cytoplasmic side of the membrane; the sequence is MNKQSWLLNLSLLKTHPAFRA. The chain crosses the membrane as a helical span at residues 22-42; that stretch reads VFLARFISIVSLGLLGVAVPV. Over 43–55 the chain is Periplasmic; the sequence is QIQMMTHSTWLVG. The helical transmembrane segment at 56 to 76 threads the bilayer; sequence LSVTLTGGAMFVGLMVGGVLA. Residues 77 to 83 lie on the Cytoplasmic side of the membrane; the sequence is DRYERKK. A helical membrane pass occupies residues 84–104; the sequence is VILLARGTCGIGFIGLCLNAL. Residues 105-109 lie on the Periplasmic side of the membrane; that stretch reads LPEPS. Residues 110-130 traverse the membrane as a helical segment; that stretch reads LLAIYLLGLWDGFFASLGVTA. Topologically, residues 131–156 are cytoplasmic; sequence LLAATPALVGRENLMQAGAITMLTVR. Residues 157-177 traverse the membrane as a helical segment; the sequence is LGSVISPMIGGLLLATGGVAW. Residue Asn-178 is a topological domain, periplasmic. Residues 179–199 traverse the membrane as a helical segment; that stretch reads YGLAAAGTFITLLPLLSLPAL. At 200–218 the chain is on the cytoplasmic side; the sequence is PPPPQPREHPLKSLLAGFR. The chain crosses the membrane as a helical span at residues 219 to 239; the sequence is FLLASPLVGGIALLGGLLTMA. The Periplasmic portion of the chain corresponds to 240–256; the sequence is SAVRVLYPALADNWQMS. The chain crosses the membrane as a helical span at residues 257–277; that stretch reads AAEIGFLYAAIPLGAAIGALT. Over 278-287 the chain is Cytoplasmic; the sequence is SGKLAHSARP. A helical transmembrane segment spans residues 288 to 307; sequence GLLMLLSTLGSFLAIGLFGL. Residues 308-313 lie on the Periplasmic side of the membrane; the sequence is MPMWIL. Residues 314 to 336 traverse the membrane as a helical segment; it reads GVVCLALFGWLSAVSSLLQYTML. At 337–356 the chain is on the cytoplasmic side; sequence QTQTPEAMLGRINGLWTAQN. The helical transmembrane segment at 357 to 377 threads the bilayer; sequence VTGDAIGAALLGGLGAMMTPV. Position 378 (Ala-378) is a topological domain, periplasmic. A helical membrane pass occupies residues 379 to 399; the sequence is SASASGFGLLIIGVLLLLVLV. Over 400–416 the chain is Cytoplasmic; the sequence is ELRRFRQTPPQVTASDS.

The protein belongs to the major facilitator superfamily. EntS (TC 2.A.1.38) family.

It is found in the cell inner membrane. Component of an export pathway for enterobactin. This Shigella boydii serotype 4 (strain Sb227) protein is Enterobactin exporter EntS.